The sequence spans 85 residues: Large ribosomal subunit protein bL27 (85 aa).

Positions 1 to 22 (MAHKKAGGSTKNGRDSESKRLG) are disordered.

It belongs to the bacterial ribosomal protein bL27 family.

The chain is Large ribosomal subunit protein bL27 from Idiomarina loihiensis (strain ATCC BAA-735 / DSM 15497 / L2-TR).